Reading from the N-terminus, the 274-residue chain is Bis(5'-nucleosyl)-tetraphosphatase, symmetrical (274 aa).

This sequence belongs to the Ap4A hydrolase family.

The enzyme catalyses P(1),P(4)-bis(5'-adenosyl) tetraphosphate + H2O = 2 ADP + 2 H(+). In terms of biological role, hydrolyzes diadenosine 5',5'''-P1,P4-tetraphosphate to yield ADP. The polypeptide is Bis(5'-nucleosyl)-tetraphosphatase, symmetrical (Shewanella baltica (strain OS155 / ATCC BAA-1091)).